The sequence spans 314 residues: MEAILDKIFVEEAVSELHTLQDMIRWTVSRFNAANLFYGQGTDNAWDEAVQLILPTLYLPIDVPPHVLSSRLTSSERLRVVERVIKRINDRTPVAYLTNKAWFCGLEFFVDSRVLVPRSPIGELIQNRFEPWLTEEPTRIMDLCTGSGCIAIACANAFPEAEVDAIDISVDALNVAEQNIQDHGLEQQVFPIRSDLFRDLPQEQYDLIVTNPPYVDQEDMDSLPSEFRHEPELGLAAGSDGLKLARRILANAPLYLKENGILVCEVGNSMVHMMEQYPHIPFTWLEFENGGHGVFLLTREQLIDCAADFALYKD.

This sequence belongs to the protein N5-glutamine methyltransferase family. PrmB subfamily.

It catalyses the reaction L-glutaminyl-[ribosomal protein uL3] + S-adenosyl-L-methionine = N(5)-methyl-L-glutaminyl-[ribosomal protein uL3] + S-adenosyl-L-homocysteine + H(+). Its function is as follows. Methylates large ribosomal subunit protein uL3 on a specific glutamine residue. The chain is Ribosomal protein uL3 glutamine methyltransferase from Vibrio cholerae serotype O1 (strain ATCC 39315 / El Tor Inaba N16961).